The following is a 320-amino-acid chain: uncharacterized protein (320 aa).

Positions 196-273 are disordered; the sequence is VVPEYDFDSE…RSKNNSNTTK (78 aa). The span at 200 to 210 shows a compositional bias: acidic residues; sequence YDFDSESESDN. Residues 211–226 are compositionally biased toward basic and acidic residues; sequence SEEKRFVPVLETEKAP. Positions 248 to 273 are enriched in polar residues; that stretch reads QPKNPKQTTLKNTLDTRSKNNSNTTK.

This is an uncharacterized protein from Acanthamoeba polyphaga mimivirus (APMV).